Consider the following 143-residue polypeptide: Flagellar assembly factor FliW (143 aa).

It belongs to the FliW family. In terms of assembly, interacts with translational regulator CsrA and flagellin(s).

The protein localises to the cytoplasm. Functionally, acts as an anti-CsrA protein, binds CsrA and prevents it from repressing translation of its target genes, one of which is flagellin. Binds to flagellin and participates in the assembly of the flagellum. The chain is Flagellar assembly factor FliW from Clostridium botulinum (strain Okra / Type B1).